The following is a 424-amino-acid chain: MTISILGARVIDPKTGLDQVTDLHLDGGRIAAIGAAPAGFSASRTIQADGVVAAPGLVDLGVSLREPGYSRKGNIRSETRAAVAGGVTSLCCPPQTRPVLDTLAVAELILDRAREAANSKVYPIGALTKGLEGEQLAELVALRDTGCVAFGNGLKQIPNNRTLARALEYAATFDLTVVFHSQDRDLAEGGLAHEGAMASFLGLPGIPESAETVALARNLLLVEQSGVRAHFSQITSARGAQLIAQAQELGLPVTADVALYQLILTDESVRQFSSLYHVQPPLRTAKDRDGLRAAVKSGVIQAISSHHQPHERDAKLAPFGATEPGISSVELLLPLAMTLVQDGLLDLPTLLARLSSGPAAALRVPAGELKVGGAADLVLFDPQASTVAGEQWSSRGENCPFIGHCLPGAVRYTLVDGHVCHGPE.

The protein belongs to the metallo-dependent hydrolases superfamily. DHOase family. PyrC' subfamily. Heterododecamer of 6 active PyrB subunits and 6 non-catalytic PyrC' subunits.

Non-functional DHOase. The chain is Dihydroorotase-like protein from Pseudomonas putida (Arthrobacter siderocapsulatus).